Reading from the N-terminus, the 416-residue chain is Tyrosine--tRNA ligase (416 aa).

Tyr40 is an L-tyrosine binding site. Residues 45–54 (ATAASLHVGH) carry the 'HIGH' region motif. L-tyrosine is bound by residues Tyr177 and Gln181. A 'KMSKS' region motif is present at residues 237-241 (KMGKS). Lys240 lines the ATP pocket. Residues 351–416 (LSVTHFLVAA…RKKHKLVRLA (66 aa)) form the S4 RNA-binding domain.

Belongs to the class-I aminoacyl-tRNA synthetase family. TyrS type 1 subfamily. As to quaternary structure, homodimer.

Its subcellular location is the cytoplasm. The catalysed reaction is tRNA(Tyr) + L-tyrosine + ATP = L-tyrosyl-tRNA(Tyr) + AMP + diphosphate + H(+). Its function is as follows. Catalyzes the attachment of tyrosine to tRNA(Tyr) in a two-step reaction: tyrosine is first activated by ATP to form Tyr-AMP and then transferred to the acceptor end of tRNA(Tyr). The chain is Tyrosine--tRNA ligase from Cereibacter sphaeroides (strain ATCC 17025 / ATH 2.4.3) (Rhodobacter sphaeroides).